The sequence spans 240 residues: RNA-binding protein pno1 (240 aa).

Over residues 1–15 the composition is skewed to basic and acidic residues; it reads MEAENIRADAFEPAK. The tract at residues 1–61 is disordered; sequence MEAENIRADA…APPKAKRARS (61 aa). Residues 164-213 form the KH domain; it reads QSRAIGRLAGKGGRTKFTIENVTKTRIVLADSKIHILGSYQNIQLARRAV.

It belongs to the PNO1 family.

The protein resides in the nucleus. The protein localises to the nucleolus. The chain is RNA-binding protein pno1 (l(1)G0004) from Drosophila melanogaster (Fruit fly).